Consider the following 301-residue polypeptide: MANSTDETATTTLAPAPCFLFDIEGTTTSISFVHEVLFPYARNQVEAFLAAHWDTDAVKADVDKLREQVSGCGKRSVADEAGPKEHGAEAASRLCASRPILLNLLEKIILTWPLVPTAHPLLELGHIWKDAYTSGNVKGHIYEDVVPAFQRLTEAGAQLYIYSSGSIAAQKLLFGHSEAGDLQPYLSGYFDTTTGPKRDAASYSDIAAAIGVTPQSIIFLSDRIEECRAASAAAMRTALVVRPGNAPLSEAERTEFPILHDFTGLRGAKFTQAQAGDTEAKRSASGDGALAAKKAPPTHDF.

Mg(2+) is bound by residues Asp22 and Glu24. Substrate contacts are provided by residues 163 to 164 (SS) and Lys197. Asp222 lines the Mg(2+) pocket. The segment at 273–301 (AQAGDTEAKRSASGDGALAAKKAPPTHDF) is disordered.

This sequence belongs to the HAD-like hydrolase superfamily. MasA/MtnC family. As to quaternary structure, monomer. It depends on Mg(2+) as a cofactor.

Its subcellular location is the cytoplasm. The protein resides in the nucleus. The catalysed reaction is 5-methylsulfanyl-2,3-dioxopentyl phosphate + H2O = 1,2-dihydroxy-5-(methylsulfanyl)pent-1-en-3-one + phosphate. It functions in the pathway amino-acid biosynthesis; L-methionine biosynthesis via salvage pathway; L-methionine from S-methyl-5-thio-alpha-D-ribose 1-phosphate: step 3/6. It participates in amino-acid biosynthesis; L-methionine biosynthesis via salvage pathway; L-methionine from S-methyl-5-thio-alpha-D-ribose 1-phosphate: step 4/6. Its function is as follows. Bifunctional enzyme that catalyzes the enolization of 2,3-diketo-5-methylthiopentyl-1-phosphate (DK-MTP-1-P) into the intermediate 2-hydroxy-3-keto-5-methylthiopentenyl-1-phosphate (HK-MTPenyl-1-P), which is then dephosphorylated to form the acireductone 1,2-dihydroxy-3-keto-5-methylthiopentene (DHK-MTPene). The polypeptide is Enolase-phosphatase E1 (Monosiga brevicollis (Choanoflagellate)).